The chain runs to 206 residues: Isochorismatase family protein 1B (206 aa).

Belongs to the isochorismatase family.

This Dictyostelium discoideum (Social amoeba) protein is Isochorismatase family protein 1B.